A 431-amino-acid chain; its full sequence is Histidine--tRNA ligase (431 aa).

The protein belongs to the class-II aminoacyl-tRNA synthetase family. In terms of assembly, homodimer.

It localises to the cytoplasm. It catalyses the reaction tRNA(His) + L-histidine + ATP = L-histidyl-tRNA(His) + AMP + diphosphate + H(+). The protein is Histidine--tRNA ligase (hisS) of Leifsonia xyli subsp. xyli (strain CTCB07).